The primary structure comprises 524 residues: G1/S-specific cyclin-E (524 aa).

The tract at residues Met1–Glu155 is disordered. Residues Lys18–Ile47 are compositionally biased toward basic and acidic residues. Residues Pro48–Ser62 are compositionally biased toward polar residues. Composition is skewed to basic and acidic residues over residues Asp63 to Ala78, Lys86 to Ser95, and Glu146 to Glu155.

This sequence belongs to the cyclin family. Cyclin E subfamily. In terms of assembly, interacts with a member of the CDK2/CDK protein kinases to form a serine/threonine kinase holoenzyme complex. The cyclin subunit imparts substrate specificity to the complex. As to expression, expressed dynamically in proliferating cells throughout development. Detectable in larval blast cells undergoing active proliferation that give rise to all tissue types, including germline, intestine, hypodermis, neurons, and muscle.

It is found in the nucleus. The protein localises to the cytoplasm. It localises to the cytoskeleton. Its subcellular location is the microtubule organizing center. The protein resides in the centrosome. It is found in the centriole. In terms of biological role, essential for the control of the cell cycle at the G1/S (start) transition. In association with cdk-2, regulates proliferation, quiescent state and cell fate during the development of several cell lineages. In the embryo, initiates the establishment of cell polarity through the recruitment of the centrosomal proteins spd-2 and spd-5 during prophase. During the development of the vulva, controls the onset of vulval cell terminal differentiation by controlling the duration of G1 phase. During hypoderm development at early larval stages, controls syncytial fate of seam cell daughter cells. Involved in the progression of cell division in the intestinal lineage in larvae, and in particular in endoreplication, a specific growth pathway in the intestinal epithelium, required for feeding and gut development in growing larvae. By controlling the activity of translational repressor gld-1, regulates the pool of germline stem cells and the size of the mitotic zone by preventing entry into meiosis. In addition, repression of expression by gld-1 prevents mitosis re-entry in meiotic germline cells. The chain is G1/S-specific cyclin-E from Caenorhabditis elegans.